A 227-amino-acid polypeptide reads, in one-letter code: ATP phosphoribosyltransferase (227 aa).

It belongs to the ATP phosphoribosyltransferase family. Short subfamily. Heteromultimer composed of HisG and HisZ subunits.

The protein localises to the cytoplasm. It carries out the reaction 1-(5-phospho-beta-D-ribosyl)-ATP + diphosphate = 5-phospho-alpha-D-ribose 1-diphosphate + ATP. The protein operates within amino-acid biosynthesis; L-histidine biosynthesis; L-histidine from 5-phospho-alpha-D-ribose 1-diphosphate: step 1/9. Its function is as follows. Catalyzes the condensation of ATP and 5-phosphoribose 1-diphosphate to form N'-(5'-phosphoribosyl)-ATP (PR-ATP). Has a crucial role in the pathway because the rate of histidine biosynthesis seems to be controlled primarily by regulation of HisG enzymatic activity. The chain is ATP phosphoribosyltransferase from Nitrosospira multiformis (strain ATCC 25196 / NCIMB 11849 / C 71).